The chain runs to 81 residues: Photosystem I iron-sulfur center (81 aa).

2 consecutive 4Fe-4S ferredoxin-type domains span residues 2–31 and 39–68; these read SHAV…MVPW and IAAS…IRVY. Residues Cys11, Cys14, Cys17, Cys21, Cys48, Cys51, Cys54, and Cys58 each contribute to the [4Fe-4S] cluster site.

In terms of assembly, the cyanobacterial PSI reaction center is composed of one copy each of PsaA,B,C,D,E,F,I,J,K,L,M and X, and forms trimeric complexes. Requires [4Fe-4S] cluster as cofactor.

It is found in the cellular thylakoid membrane. The enzyme catalyses reduced [plastocyanin] + hnu + oxidized [2Fe-2S]-[ferredoxin] = oxidized [plastocyanin] + reduced [2Fe-2S]-[ferredoxin]. Apoprotein for the two 4Fe-4S centers FA and FB of photosystem I (PSI); essential for photochemical activity. FB is the terminal electron acceptor of PSI, donating electrons to ferredoxin. The C-terminus interacts with PsaA/B/D and helps assemble the protein into the PSI complex. Required for binding of PsaD and PsaE to PSI. PSI is a plastocyanin/cytochrome c6-ferredoxin oxidoreductase, converting photonic excitation into a charge separation, which transfers an electron from the donor P700 chlorophyll pair to the spectroscopically characterized acceptors A0, A1, FX, FA and FB in turn. This chain is Photosystem I iron-sulfur center, found in Prochlorococcus marinus (strain MIT 9303).